Here is a 412-residue protein sequence, read N- to C-terminus: MTTTQVLLDSLLANKASINLATTEQKNQALSAMADQLVAQTEAILAGNAIDMEHAQGKISQVMQDRLLLTEERIEAMADGIRALIGLPDPVGLVLEESTRADGLNICKKSIPFGLVGMIYESRPNVTSDAAALAIKSGNAVILRGGKEAFHSAKAIVTALKSGLEEAGVSPKVIELVQDTSRVSATELMTAKGKIDLLVPRGGAGLIQAVVENATVPVIETGTGICHVYVDKDADLDKALRIVVNAKTSRPSVCNAAEVLLVHEEIASQFLPRLEEALSGQVELRADSQAQALLNQARPAGDQDFDTEFLDYIMAVKVVSSVEEAISHIAQHSTGHSEAIVTENSQTAEHFTLHVDSAAVYVNASTRFTDGGEFGLGCELGISTQKMHARGPMGLREMTTYKYIITGDGHIR.

It belongs to the gamma-glutamyl phosphate reductase family.

The protein resides in the cytoplasm. The enzyme catalyses L-glutamate 5-semialdehyde + phosphate + NADP(+) = L-glutamyl 5-phosphate + NADPH + H(+). It participates in amino-acid biosynthesis; L-proline biosynthesis; L-glutamate 5-semialdehyde from L-glutamate: step 2/2. Its function is as follows. Catalyzes the NADPH-dependent reduction of L-glutamate 5-phosphate into L-glutamate 5-semialdehyde and phosphate. The product spontaneously undergoes cyclization to form 1-pyrroline-5-carboxylate. The protein is Gamma-glutamyl phosphate reductase of Streptococcus suis (strain 98HAH33).